A 552-amino-acid polypeptide reads, in one-letter code: Chaperonin GroEL (552 aa).

ATP contacts are provided by residues 30-33 (TLGP), K51, 87-91 (DGTTT), G415, 479-481 (NAA), and D495.

It belongs to the chaperonin (HSP60) family. Forms a cylinder of 14 subunits composed of two heptameric rings stacked back-to-back. Interacts with the co-chaperonin GroES.

The protein resides in the cytoplasm. The catalysed reaction is ATP + H2O + a folded polypeptide = ADP + phosphate + an unfolded polypeptide.. Together with its co-chaperonin GroES, plays an essential role in assisting protein folding. The GroEL-GroES system forms a nano-cage that allows encapsulation of the non-native substrate proteins and provides a physical environment optimized to promote and accelerate protein folding. The polypeptide is Chaperonin GroEL (Stutzerimonas stutzeri (Pseudomonas stutzeri)).